The chain runs to 230 residues: Potassium/proton antiporter CemA (230 aa).

Transmembrane regions (helical) follow at residues Leu-7 to Phe-27, Ile-106 to Leu-126, Leu-145 to His-165, and Leu-181 to Leu-201.

It belongs to the CemA family.

The protein resides in the plastid. The protein localises to the chloroplast inner membrane. The catalysed reaction is K(+)(in) + H(+)(out) = K(+)(out) + H(+)(in). Functionally, contributes to K(+)/H(+) antiport activity by supporting proton efflux to control proton extrusion and homeostasis in chloroplasts in a light-dependent manner to modulate photosynthesis. Prevents excessive induction of non-photochemical quenching (NPQ) under continuous-light conditions. Indirectly promotes efficient inorganic carbon uptake into chloroplasts. The protein is Potassium/proton antiporter CemA of Oryza nivara (Indian wild rice).